The following is a 555-amino-acid chain: Membrane protein insertase YidC (555 aa).

The helical transmembrane segment at 7–24 (ILWVIFSMSLVLLYDNWQ) threads the bilayer. The segment at 61–81 (TAGAAAPAAPGGAPQAAAQPT) is disordered. Transmembrane regions (helical) follow at residues 341 to 361 (GWLTILAKPLFWLLEKLHGFL), 364 to 384 (WGWSIIALTVLIKLVFFPLSA), 430 to 450 (LGGCLPIVIQIPVFIALYWVL), 468 to 488 (LSVPDPFYILPIVMAVSMFVQ), and 503 to 523 (VMMIMPLVFSFMFFFFPAGLV).

This sequence belongs to the OXA1/ALB3/YidC family. Type 1 subfamily. In terms of assembly, interacts with the Sec translocase complex via SecD. Specifically interacts with transmembrane segments of nascent integral membrane proteins during membrane integration.

It localises to the cell inner membrane. Its function is as follows. Required for the insertion and/or proper folding and/or complex formation of integral membrane proteins into the membrane. Involved in integration of membrane proteins that insert both dependently and independently of the Sec translocase complex, as well as at least some lipoproteins. Aids folding of multispanning membrane proteins. The sequence is that of Membrane protein insertase YidC from Cupriavidus pinatubonensis (strain JMP 134 / LMG 1197) (Cupriavidus necator (strain JMP 134)).